A 483-amino-acid chain; its full sequence is MLSANMLRRMHHGVAVTRMLLVSNGKVQVKKSALYPVMAKLARTYATKNYPAHTVINMPALSPTMTTGNIGAFQKKIGDKIEPGDVLCEIETDKAQIDFEQQDEGYLAKILIETGTKDVPVGKPLAVTVENEGDVAAMADFTIEDSSAKEPSAKSGEEKSAPSSEKQSKETSSPSNVSGEERGDRVFASPLARKLAEEKDLDLSQIRGSGPNGRIIKVDIENFKPVVAPKPSNEAAAKATTPAASAADAAAPGDYEDLPLSNMRKIIASRLAESKNMNPHYYVTVSVNMEKIIRLRAALNAMADGRYKLSVNDLVIKATTAALRQVPEVNAAWMGDFIRQYKNVDISMAVATPSGLITPVIRNTHALGLAEISTLAKDYGQRARNNKLKPEEYQGGTFTISNLGMFPVDQFTAIINPPQACILAVGTTVDTVVPDSTSEKGFKVAPIMKCTLSSDHRVVDGAMAARFTTALKKILENPLEIML.

A mitochondrion-targeting transit peptide spans 1–28 (MLSANMLRRMHHGVAVTRMLLVSNGKVQ). The Lipoyl-binding domain occupies 53-129 (HTVINMPALS…PVGKPLAVTV (77 aa)). Lys-94 is modified (N6-lipoyllysine). Disordered regions lie at residues 143 to 187 (IEDS…DRVF) and 234 to 254 (EAAA…APGD). Residues 146–160 (SSAKEPSAKSGEEKS) are compositionally biased toward basic and acidic residues. Residues 161-178 (APSSEKQSKETSSPSNVS) show a composition bias toward polar residues. The Peripheral subunit-binding (PSBD) domain maps to 187–224 (FASPLARKLAEEKDLDLSQIRGSGPNGRIIKVDIENFK). A compositionally biased stretch (low complexity) spans 235–252 (AAAKATTPAASAADAAAP). Catalysis depends on residues His-456 and Asp-460.

The protein belongs to the 2-oxoacid dehydrogenase family. It depends on (R)-lipoate as a cofactor.

The protein localises to the mitochondrion matrix. It catalyses the reaction N(6)-[(R)-dihydrolipoyl]-L-lysyl-[protein] + acetyl-CoA = N(6)-[(R)-S(8)-acetyldihydrolipoyl]-L-lysyl-[protein] + CoA. Its function is as follows. The pyruvate dehydrogenase complex catalyzes the overall conversion of pyruvate to acetyl-CoA and CO(2). It contains multiple copies of three enzymatic components: pyruvate dehydrogenase (E1), dihydrolipoamide acetyltransferase (E2) and lipoamide dehydrogenase (E3). The protein is Dihydrolipoyllysine-residue acetyltransferase component of pyruvate dehydrogenase complex, mitochondrial of Schizosaccharomyces pombe (strain 972 / ATCC 24843) (Fission yeast).